The primary structure comprises 772 residues: Mitochondrial intermediate peptidase (772 aa).

Residues 1-37 (MLRTIILKAGSNASIPSPSRQNKLLRFFATAGAVSRT) constitute a mitochondrion transit peptide. Residue His-558 coordinates Zn(2+). Residue Glu-559 is part of the active site. Zn(2+)-binding residues include His-562 and Glu-587.

Belongs to the peptidase M3 family. Requires Zn(2+) as cofactor.

Its subcellular location is the mitochondrion matrix. The enzyme catalyses Release of an N-terminal octapeptide as second stage of processing of some proteins imported into the mitochondrion.. Its activity is regulated as follows. Stimulated by Fe(2+). Its function is as follows. Cleaves proteins, imported into the mitochondrion, to their mature size. While most mitochondrial precursor proteins are processed to the mature form in one step by mitochondrial processing peptidase (MPP), the sequential cleavage by MIP of an octapeptide after initial processing by MPP is a required step for a subgroup of nuclear-encoded precursor proteins destined for the matrix or the inner membrane. Cleaves precursor proteins of respiratory components, including subunits of the electron transport chain and tricarboxylic acid cycle enzymes, and components of the mitochondrial genetic machinery, including ribosomal proteins, translation factors, and proteins required for mitochondrial DNA metabolism. The chain is Mitochondrial intermediate peptidase (OCT1) from Saccharomyces cerevisiae (strain ATCC 204508 / S288c) (Baker's yeast).